The following is a 224-amino-acid chain: Ribose-5-phosphate isomerase A (224 aa).

Substrate is bound by residues 26–29 (TGST), 81–84 (DGAD), and 94–97 (KGGG). Catalysis depends on Glu103, which acts as the Proton acceptor. A substrate-binding site is contributed by Lys121.

It belongs to the ribose 5-phosphate isomerase family. In terms of assembly, homodimer.

The catalysed reaction is aldehydo-D-ribose 5-phosphate = D-ribulose 5-phosphate. Its pathway is carbohydrate degradation; pentose phosphate pathway; D-ribose 5-phosphate from D-ribulose 5-phosphate (non-oxidative stage): step 1/1. In terms of biological role, catalyzes the reversible conversion of ribose-5-phosphate to ribulose 5-phosphate. This is Ribose-5-phosphate isomerase A from Listeria monocytogenes serovar 1/2a (strain ATCC BAA-679 / EGD-e).